Consider the following 276-residue polypeptide: B3 domain-containing protein REM22 (276 aa).

A DNA-binding region (TF-B3) is located at residues 11 to 115 (SETMSIQDTV…VFHFCVYEYG (105 aa)). Residues 141 to 164 (GNEESTKGLEESPRRGGTSRRRAK) are disordered. Residues 144-154 (ESTKGLEESPR) show a composition bias toward basic and acidic residues.

The protein resides in the nucleus. This Arabidopsis thaliana (Mouse-ear cress) protein is B3 domain-containing protein REM22 (REM22).